A 484-amino-acid chain; its full sequence is Cobyric acid synthase (484 aa).

The GATase cobBQ-type domain occupies 246–437 (ALRVVVPALP…VHGLFDTPAA (192 aa)). Catalysis depends on C327, which acts as the Nucleophile. The active site involves H429.

This sequence belongs to the CobB/CobQ family. CobQ subfamily.

The protein operates within cofactor biosynthesis; adenosylcobalamin biosynthesis. Catalyzes amidations at positions B, D, E, and G on adenosylcobyrinic A,C-diamide. NH(2) groups are provided by glutamine, and one molecule of ATP is hydrogenolyzed for each amidation. In Paraburkholderia phymatum (strain DSM 17167 / CIP 108236 / LMG 21445 / STM815) (Burkholderia phymatum), this protein is Cobyric acid synthase.